We begin with the raw amino-acid sequence, 160 residues long: DNA topoisomerase small subunit (160 aa).

As to quaternary structure, part of the DNA topoisomerase complex made of gp39, gp52 and gp60. Requires Mg(2+) as cofactor.

The catalysed reaction is ATP-dependent breakage, passage and rejoining of double-stranded DNA.. Functionally, small subunit of the DNA topoisomerase that untwists superhelical DNA. Controls topological states of double-stranded DNA by transient breakage and subsequent rejoining of DNA strands. This chain is DNA topoisomerase small subunit (60), found in Enterobacteria phage T4 (Bacteriophage T4).